A 257-amino-acid polypeptide reads, in one-letter code: Trans-aconitate 2-methyltransferase (257 aa).

It belongs to the methyltransferase superfamily. Tam family.

The protein localises to the cytoplasm. The catalysed reaction is trans-aconitate + S-adenosyl-L-methionine = (E)-3-(methoxycarbonyl)pent-2-enedioate + S-adenosyl-L-homocysteine. Functionally, catalyzes the S-adenosylmethionine monomethyl esterification of trans-aconitate. This chain is Trans-aconitate 2-methyltransferase, found in Sinorhizobium fredii (strain NBRC 101917 / NGR234).